Here is a 178-residue protein sequence, read N- to C-terminus: C-phycoerythrin class 2 subunit beta (178 aa).

Residues C50 and C61 each coordinate phycourobilin. C82 and C159 together coordinate (2R,3E)-phycoerythrobilin.

The protein belongs to the phycobiliprotein family. Heterodimer of an alpha and a beta chain. In terms of processing, contains two covalently linked phycoerythrobilin chromophores and one covalently linked phycourobilin chromophore.

The protein resides in the cellular thylakoid membrane. In terms of biological role, light-harvesting photosynthetic bile pigment-protein from the phycobiliprotein complex. This chain is C-phycoerythrin class 2 subunit beta (mpeB), found in Synechococcus sp. (strain WH8103).